We begin with the raw amino-acid sequence, 188 residues long: Elongation factor P (188 aa).

Position 34 is an N6-(3,6-diaminohexanoyl)-5-hydroxylysine (Lys-34).

This sequence belongs to the elongation factor P family. Post-translationally, may be beta-lysylated on the epsilon-amino group of Lys-34 by the combined action of EpmA and EpmB, and then hydroxylated on the C5 position of the same residue by EpmC (if this protein is present). Lysylation is critical for the stimulatory effect of EF-P on peptide-bond formation. The lysylation moiety may extend toward the peptidyltransferase center and stabilize the terminal 3-CCA end of the tRNA. Hydroxylation of the C5 position on Lys-34 may allow additional potential stabilizing hydrogen-bond interactions with the P-tRNA.

Its subcellular location is the cytoplasm. It functions in the pathway protein biosynthesis; polypeptide chain elongation. Involved in peptide bond synthesis. Alleviates ribosome stalling that occurs when 3 or more consecutive Pro residues or the sequence PPG is present in a protein, possibly by augmenting the peptidyl transferase activity of the ribosome. Modification of Lys-34 is required for alleviation. This Haemophilus influenzae (strain PittGG) protein is Elongation factor P.